Consider the following 774-residue polypeptide: MTPRPSSSGPDPRKTTGKKPAGKTPTGKKPAKAAKKKAPRRTTASANASATTSVSGAEVAVSPAPDAADRERLLAGTHHDPHAVLGAHRVPGGVAFRVFRPYALAVTVLSGELRVGLHDDGDGFFSGLVPLKDVPAHRLLVAYEGTEQEVEDPYRFLPTLGELDLHLLGEGRHEQLWRALGAHPTTHEGVAGTRFAVWAPNARGVRVAGGFNFWDGTGHPMRSLGSTGVWELFLPGVGAGELYKFEITRPDGSRTFRADPLARRTEVPPATSSVVHASDYTWGDEEWLAHRADAPAHEAPMSVYEVHLPSWRPGLTYRQLAEQLPAYVADLGFTHVELMPVAEHPFGGSWGYQVTGFYAPTARLGDPDDFKYLVDRLHRAGIGVLMDWVPAHFPRDDWALAEFDGRPLYEHSDPLRAAHPDWGTLEFDFGRREVRNFLVANAVYWCEEFHIDGLRVDAVASMLYLDYSREPGEWEPNEHGGRENLDAVAFLQEMNATLYRRVPGVVTVAEESTAWDGVTRATHHEGPSGFGGLGFGLKWNMGWMHDSLDYMSHEPVHRKHHHGEMTFSMVYAYSENYVLPISHDEVVHGKRSLVSKMPGDWWQQRANERAYLGFMWAHPGKQLLFMGQEFAQGAEWSEAHGPDWWLLDPEYGASADHRGVRDLVRDLNTVYRATPALWRRDTHPSGFSWVVGDAAEDNVLAFLRLDADGTPLLAVSNFAPVVRSGYRLGVPDEVPAWHEVLNTDAARYGGGDVVNPDPVKPEPQGGTAARRASG.

The disordered stretch occupies residues 1–66 (MTPRPSSSGP…AEVAVSPAPD (66 aa)). Residues 29 to 40 (KPAKAAKKKAPR) show a composition bias toward basic residues. Residues 41 to 55 (RTTASANASATTSVS) are compositionally biased toward low complexity. D457 acts as the Nucleophile in catalysis. E510 (proton donor) is an active-site residue. Residues 748 to 774 (YGGGDVVNPDPVKPEPQGGTAARRASG) are disordered.

It belongs to the glycosyl hydrolase 13 family. GlgB subfamily. As to quaternary structure, monomer.

The enzyme catalyses Transfers a segment of a (1-&gt;4)-alpha-D-glucan chain to a primary hydroxy group in a similar glucan chain.. It participates in glycan biosynthesis; glycogen biosynthesis. Functionally, catalyzes the formation of the alpha-1,6-glucosidic linkages in glycogen by scission of a 1,4-alpha-linked oligosaccharide from growing alpha-1,4-glucan chains and the subsequent attachment of the oligosaccharide to the alpha-1,6 position. This is 1,4-alpha-glucan branching enzyme GlgB 1 (glgB1) from Streptomyces coelicolor (strain ATCC BAA-471 / A3(2) / M145).